The chain runs to 183 residues: Ribulose bisphosphate carboxylase small subunit, chloroplastic 7 (183 aa).

The transit peptide at 1–43 (MAAAMMNKTVVVGKESVKGGVAPKVAMSRGGFLNSGIMKKDRD) directs the protein to the chloroplast.

The protein belongs to the RuBisCO small chain family. As to quaternary structure, heterohexadecamer of 8 large and 8 small subunits.

It localises to the plastid. It is found in the chloroplast. Functionally, ruBisCO catalyzes two reactions: the carboxylation of D-ribulose 1,5-bisphosphate, the primary event in carbon dioxide fixation, as well as the oxidative fragmentation of the pentose substrate. Both reactions occur simultaneously and in competition at the same active site. Although the small subunit is not catalytic it is essential for maximal activity. The chain is Ribulose bisphosphate carboxylase small subunit, chloroplastic 7 from Acetabularia peniculus (Green alga).